Reading from the N-terminus, the 246-residue chain is PARP-type zinc finger-containing protein C2A9.07c (246 aa).

The PARP-type; degenerate zinc-finger motif lies at 8-99 (YRVELAKTGR…EKILRAFEQG (92 aa)). A compositionally biased stretch (basic and acidic residues) spans 103-126 (EEDEERCRKMASDASEEKDRKIEE). The interval 103–246 (EEDEERCRKM…ESGNEYSDSD (144 aa)) is disordered. T130 carries the post-translational modification Phosphothreonine. The residue at position 131 (S131) is a Phosphoserine. The segment covering 157-168 (NKKHKAERKRSP) has biased composition (basic residues). A compositionally biased stretch (acidic residues) spans 175–184 (LEDDEEIEDV). Over residues 185 to 196 (ASDKDEEEKPWS) the composition is skewed to basic and acidic residues. Positions 197–215 (GDEEDDDELVVKDSEDETE) are enriched in acidic residues. 2 positions are modified to phosphoserine: S243 and S245.

Its subcellular location is the nucleus. It is found in the mitochondrion. The protein is PARP-type zinc finger-containing protein C2A9.07c of Schizosaccharomyces pombe (strain 972 / ATCC 24843) (Fission yeast).